The primary structure comprises 485 residues: Glutamate--tRNA ligase (485 aa).

Positions 11 to 21 match the 'HIGH' region motif; it reads PSPTGHLHIGN. A 'KMSKS' region motif is present at residues 252–256; it reads KLSKR. Residue K255 participates in ATP binding.

This sequence belongs to the class-I aminoacyl-tRNA synthetase family. Glutamate--tRNA ligase type 1 subfamily. Monomer.

It localises to the cytoplasm. The enzyme catalyses tRNA(Glu) + L-glutamate + ATP = L-glutamyl-tRNA(Glu) + AMP + diphosphate. Its function is as follows. Catalyzes the attachment of glutamate to tRNA(Glu) in a two-step reaction: glutamate is first activated by ATP to form Glu-AMP and then transferred to the acceptor end of tRNA(Glu). The polypeptide is Glutamate--tRNA ligase (Bacillus cereus (strain ATCC 14579 / DSM 31 / CCUG 7414 / JCM 2152 / NBRC 15305 / NCIMB 9373 / NCTC 2599 / NRRL B-3711)).